A 431-amino-acid chain; its full sequence is Probable sodium/metabolite cotransporter BASS3, chloroplastic (431 aa).

The N-terminal 70 residues, 1 to 70, are a transit peptide targeting the chloroplast; it reads MTLIASLSLP…RRNSGLVPVV (70 aa). Helical transmembrane passes span 110–130, 145–165, 169–189, 198–218, 238–258, 261–281, 288–308, 325–345, and 387–407; these read FWSALLPFVVALTAVAALSYP, LGGIMLSIGIQLSVDDFALAF, VPLSVGFVAQYVLKPLLGVLV, TFYAGFILTCCVAGAQLSSYA, IASVIFTPLLSGLLIGSVVPV, VAMSKSILQVVLVPITLGLVL, VVTLLQPVMPFVAMVCTSLCI, LGLIVPIVTFHAVAFALGYWF, and VPAACSVVVMAIMGLCLASFW.

This sequence belongs to the bile acid:sodium symporter (BASS) (TC 2.A.28) family.

Its subcellular location is the membrane. The protein resides in the plastid. It is found in the chloroplast envelope. Functionally, may function as sodium-coupled metabolite transporter across the chloroplast envelope. The polypeptide is Probable sodium/metabolite cotransporter BASS3, chloroplastic (BASS3) (Arabidopsis thaliana (Mouse-ear cress)).